The primary structure comprises 429 residues: SH2 domain-containing protein 5 (429 aa).

One can recognise an SH2 domain in the interval 302 to 398 (WAFAGLSRSC…LSMGRLNPTY (97 aa)).

As to quaternary structure, interacts with BCR. In terms of tissue distribution, highly expressed in brain, particularly in Purkinjie cells in the cerebellum and the cornu ammonis of the hippocampus.

The protein localises to the postsynaptic density. Functionally, may be involved in synaptic plasticity regulation through the control of Rac-GTP levels. In Mus musculus (Mouse), this protein is SH2 domain-containing protein 5.